Here is a 426-residue protein sequence, read N- to C-terminus: Glutamate-1-semialdehyde 2,1-aminomutase (426 aa).

K265 bears the N6-(pyridoxal phosphate)lysine mark.

It belongs to the class-III pyridoxal-phosphate-dependent aminotransferase family. HemL subfamily. Homodimer. Pyridoxal 5'-phosphate is required as a cofactor.

The protein resides in the cytoplasm. It catalyses the reaction (S)-4-amino-5-oxopentanoate = 5-aminolevulinate. It functions in the pathway porphyrin-containing compound metabolism; protoporphyrin-IX biosynthesis; 5-aminolevulinate from L-glutamyl-tRNA(Glu): step 2/2. This is Glutamate-1-semialdehyde 2,1-aminomutase from Cronobacter sakazakii (strain ATCC BAA-894) (Enterobacter sakazakii).